A 578-amino-acid polypeptide reads, in one-letter code: Sulfite reductase [NADPH] hemoprotein beta-component (578 aa).

[4Fe-4S] cluster-binding residues include Cys441, Cys447, Cys487, and Cys491. Residue Cys491 participates in siroheme binding.

This sequence belongs to the nitrite and sulfite reductase 4Fe-4S domain family. In terms of assembly, alpha(8)-beta(8). The alpha component is a flavoprotein, the beta component is a hemoprotein. Siroheme serves as cofactor. It depends on [4Fe-4S] cluster as a cofactor.

The enzyme catalyses hydrogen sulfide + 3 NADP(+) + 3 H2O = sulfite + 3 NADPH + 4 H(+). It functions in the pathway sulfur metabolism; hydrogen sulfide biosynthesis; hydrogen sulfide from sulfite (NADPH route): step 1/1. Functionally, component of the sulfite reductase complex that catalyzes the 6-electron reduction of sulfite to sulfide. This is one of several activities required for the biosynthesis of L-cysteine from sulfate. The chain is Sulfite reductase [NADPH] hemoprotein beta-component from Vibrio vulnificus (strain YJ016).